Reading from the N-terminus, the 608-residue chain is Probable methyltransferase PMT3 (608 aa).

Topologically, residues 1-12 are cytoplasmic; sequence MKGRSDGGQKKR. The chain crosses the membrane as a helical; Signal-anchor for type II membrane protein span at residues 13–33; sequence VIALVCVAAVVLVFVYLFYGS. At 34 to 608 the chain is on the lumenal side; that stretch reads SDHRASAIEY…LTSESLRDME (575 aa). N-linked (GlcNAc...) asparagine glycosylation is present at asparagine 342.

It belongs to the methyltransferase superfamily.

Its subcellular location is the golgi apparatus membrane. The chain is Probable methyltransferase PMT3 from Arabidopsis thaliana (Mouse-ear cress).